The chain runs to 297 residues: Trans-enoyl reductase TOXD (297 aa).

Residues 162–165 and Tyr203 contribute to the NADP(+) site; that span reads STAT.

Belongs to the zinc-containing alcohol dehydrogenase family. In terms of assembly, monomer.

Its function is as follows. Trans-enoyl reductase; part of the diffuse TOX2 gene cluster that mediates the biosynthesis of the HC-toxin, cyclic tetrapeptide of structure cyclo(D-Pro-L-Ala-D-Ala-L-Aeo), where Aeo stands for 2-amino-9,10-epoxi-8-oxodecanoic acid. HC-toxin is a determinant of specificity and virulence in the interaction between the producing fungus and its host, maize. TOXD does not seem to play a role in HC-toxin biosynthesis. In Cochliobolus carbonum (Maize leaf spot fungus), this protein is Trans-enoyl reductase TOXD.